The sequence spans 227 residues: NAD(P)H-quinone oxidoreductase subunit K, chloroplastic (227 aa).

Cysteine 43, cysteine 44, cysteine 108, and cysteine 139 together coordinate [4Fe-4S] cluster.

It belongs to the complex I 20 kDa subunit family. As to quaternary structure, NDH is composed of at least 16 different subunits, 5 of which are encoded in the nucleus. [4Fe-4S] cluster is required as a cofactor.

The protein localises to the plastid. It is found in the chloroplast thylakoid membrane. It carries out the reaction a plastoquinone + NADH + (n+1) H(+)(in) = a plastoquinol + NAD(+) + n H(+)(out). The catalysed reaction is a plastoquinone + NADPH + (n+1) H(+)(in) = a plastoquinol + NADP(+) + n H(+)(out). In terms of biological role, NDH shuttles electrons from NAD(P)H:plastoquinone, via FMN and iron-sulfur (Fe-S) centers, to quinones in the photosynthetic chain and possibly in a chloroplast respiratory chain. It has NADH- and deamino-NADH-specific dehydrogenase activity, using ferricyanide or quinones as acceptors. The immediate electron acceptor for the enzyme in this species is believed to be plastoquinone. Couples the redox reaction to proton translocation, and thus conserves the redox energy in a proton gradient. This Pisum sativum (Garden pea) protein is NAD(P)H-quinone oxidoreductase subunit K, chloroplastic.